The following is a 139-amino-acid chain: Centromere protein S (139 aa).

Residues 99–139 (ELASSNMEQKEKKKKKSSAAKGRKTEENETPVTESEDSNMA) form a disordered region. Over residues 110–120 (KKKKKSSAAKG) the composition is skewed to basic residues.

It belongs to the TAF9 family. CENP-S/MHF1 subfamily. In terms of assembly, heterodimer with CENPX, sometimes called MHF; this interaction stabilizes both partners. MHF heterodimers can assemble to form tetrameric structures. MHF also coassemble with CENPT-CENPW heterodimers at centromeres to form the tetrameric CENP-T-W-S-X complex. Forms a discrete complex with FANCM and CENPX, called FANCM-MHF; this interaction, probably mediated by direct binding between CENPS and FANCM, leads to synergistic activation of double-stranded DNA binding and strongly stimulates FANCM-mediated DNA remodeling. Recruited by FANCM to the Fanconi anemia (FA) core complex, which consists of CENPS, CENPX, FANCA, FANCB, FANCC, FANCE, FANCF, FANCG, FANCL, FANCM, FAAP24 and FAAP100. The FA core complex associates with Bloom syndrome (BLM) complex, which consists of at least BLM, DNA topoisomerase 3-alpha (TOP3A), RMI1/BLAP75, RPA1/RPA70 and RPA2/RPA32. The super complex between FA and BLM is called BRAFT. Component of the CENPA-CAD complex, composed of CENPI, CENPK, CENPL, CENPO, CENPP, CENPQ, CENPR and CENPS. The CENPA-CAD complex is probably recruited on centromeres by the CENPA-NAC complex, at least composed of CENPA, CENPC, CENPH, CENPM, CENPN, CENPT and CENPU.

The protein resides in the nucleus. It is found in the chromosome. Its subcellular location is the centromere. It localises to the kinetochore. DNA-binding component of the Fanconi anemia (FA) core complex. Required for the normal activation of the FA pathway, leading to monoubiquitination of the FANCI-FANCD2 complex in response to DNA damage, cellular resistance to DNA cross-linking drugs, and prevention of chromosomal breakage. In complex with CENPX (MHF heterodimer), crucial cofactor for FANCM in both binding and ATP-dependent remodeling of DNA. Stabilizes FANCM. In complex with CENPX and FANCM (but not other FANC proteins), rapidly recruited to blocked forks and promotes gene conversion at blocked replication forks. In complex with CENPT, CENPW and CENPX (CENP-T-W-S-X heterotetramer), involved in the formation of a functional kinetochore outer plate, which is essential for kinetochore-microtubule attachment and faithful mitotic progression. As a component of MHF and CENP-T-W-S-X complexes, binds DNA and bends it to form a nucleosome-like structure. DNA-binding function is fulfilled in the presence of CENPX, with the following preference for DNA substates: Holliday junction &gt; double-stranded &gt; splay arm &gt; single-stranded. Does not bind DNA on its own. This Gallus gallus (Chicken) protein is Centromere protein S (CENPS).